The primary structure comprises 721 residues: MQNYSRTDFAQVGTTNRGCMRVIPSDKEKEHDLIVVGGQNGSLICLSRKSNDTTIIFKTQPGYPVQSLALGGPASSKKKDKIFVASQNTVRGVNRKGKTFFSMETNMAEVANRMFVRGLDVVLTGRKSYSRYHDTVDSNSYLCTEDIHDVVSLVFEEAWGSREYTSILACGNSTLQIIEGNNFAYDVRLDSVPFTVSLFMGDGGHTKLLVLYGTKTGRLGLVSVPQGGGKILWEIDTTSGACVTTIVCFNVTGGQFPDIIVGKEDGLIEIYVIDETDHAHLFGTFSCDESITGISCGHVSSKSEIDIIICTFTGWLFSLAKTSRPMIENLPVAANFSVKMQQLRSEVEELQTKVNEERLRYEEITKRQGSGTGSTFFHSFQVHENFEYSAAHGAYNLTIELVIPIDFVVVQSQLPIRLMEVEKNASVVSEVRQDALNPWPLLASYRCQANVCRLELRVQANEGDSGVINLYVCPKVMPKCAQITTHYIKALSSHMRSHDFDLYRPMNTLQFTGNFSIAEAHAWLHNLLPNVPSKCPPADTITNNYQCSVNGGTQLQVVYSKGSAVFRSDCMTTICIIRDKVSEQTMKMQIRVEVACELNQDSVNHCLKLIDPKITSMLNIEKNKLYAAALKELESNNDDVFSFLSAANAKILKDHDAIYEKSEGVSIEDSGVLAILENLMVARGKLTGRSSKGRGDAIRDLISTDYSLENMQTLFKNAMND.

As to quaternary structure, part of BBSome complex, that contains at least bbs-1, bbs-2, bbs-4, bbs-5, osm-12, bbs-8/ttc-8 and bbs-9. Interacts with bbs-1. As to expression, expressed in ciliated cells including amphid and both inner and outer labial neurons of the head and in both phasmid neurons PHA and PHB in the tail at larval stages L1 and L2.

It localises to the cell projection. The protein resides in the cilium. It is found in the cytoplasm. Its subcellular location is the cytoskeleton. The protein localises to the cilium basal body. It localises to the cilium axoneme. Functionally, component of the BBSome complex. The BBSome complex is thought to function as a coat complex required for sorting of specific membrane proteins to the primary cilia. The BBSome complex is required for ciliogenesis but is dispensable for centriolar satellite function. Required for proper BBSome complex assembly and its ciliary localization. Required for cilia biogenesis and both the assembly and movement of intraflagellar transport proteins along the ciliary axoneme. Plays a role in the removal of degraded mechanosensory receptors within the cilia. Plays a role in guanylyl cyclase localization in the ring-like structures at the base of the finger compartment in AFD sensory neurons. In ciliated sensory neurons, required for the sensation of nitric oxide and avoidance of NO-producing organisms like P.aeruginosa. In Caenorhabditis elegans, this protein is BBSome complex member bbs-7.